The chain runs to 684 residues: MSALDFLVELGTEELPPKALAKLADAFCAGIEKGLKDAGLGFAKAQAYAAPRRLAVLVEQLATQQPDRSINLDGPPMQAAFDAHGEPTQAALGFARKCGVDLAEIDRSGPKLKFSRTIEGQPATQLLPGIVEASLNDLPIPKRMRWAARKEEFVRPTQWLVMLFGEQVIDCEILAQRAGRESRGHRFHSPGQVHISKPSSYLEDLRGAHVIADFAERRELIAKRVEQLASEQNGSAIVPPALLDEVTALVEWPVPLVCSFEERFLEVPQEALISTMQDNQKYFCLLDTNGKLLPRFITVANIESKDPAQIVSGNEKVVRPRLTDAEFFFKQDKKQPLERFNDRLKNVVFQAQLGTVFDKAERVSRLAGLIAERTGGDKARAMRAGLLSKADLATEMVGEFPEMQGIAGYYYALNEGEPEDVALALNEQYMPRGAGGELPSTLTGAAVAVADKLDTLVGIFGIGMLPTGSKDPYALRRAALGVLRILIEKQLDLNLVEAVNFAIGQFGTQVKSAGLADQVLEFIFDRLRARYEDEGVDVAAYLSVRAVQPGSALDFDQRVQAVQAFRTLPEAEALAAANKRVSNLLAKFEAKLPEAVEPRWFDNATEFSLYSALQQAEQAVQPLAAARQYREALERLAHLRGPVDAFFEAVLVNAEDASVRANRYALLARLRGLFLGVADISALG.

Belongs to the class-II aminoacyl-tRNA synthetase family. Tetramer of two alpha and two beta subunits.

The protein resides in the cytoplasm. It catalyses the reaction tRNA(Gly) + glycine + ATP = glycyl-tRNA(Gly) + AMP + diphosphate. This Stutzerimonas stutzeri (strain A1501) (Pseudomonas stutzeri) protein is Glycine--tRNA ligase beta subunit.